The primary structure comprises 643 residues: Threonine--tRNA ligase (643 aa).

The region spanning 1–61 is the TGS domain; it reads MPIITLPDGS…EQDATLEIIT (61 aa). Residues 243–534 are catalytic; the sequence is DHRKIGKALD…ITEEYAGFFP (292 aa). The Zn(2+) site is built by Cys-334, His-385, and His-511.

It belongs to the class-II aminoacyl-tRNA synthetase family. As to quaternary structure, homodimer. The cofactor is Zn(2+).

Its subcellular location is the cytoplasm. The enzyme catalyses tRNA(Thr) + L-threonine + ATP = L-threonyl-tRNA(Thr) + AMP + diphosphate + H(+). Catalyzes the attachment of threonine to tRNA(Thr) in a two-step reaction: L-threonine is first activated by ATP to form Thr-AMP and then transferred to the acceptor end of tRNA(Thr). Also edits incorrectly charged L-seryl-tRNA(Thr). In Haemophilus influenzae (strain PittGG), this protein is Threonine--tRNA ligase.